The chain runs to 157 residues: Transcriptional regulator MraZ (157 aa).

SpoVT-AbrB domains follow at residues 7 to 52 (TYTM…AGGN) and 83 to 126 (SETL…EPER).

It belongs to the MraZ family. In terms of assembly, forms oligomers.

Its subcellular location is the cytoplasm. It localises to the nucleoid. The protein is Transcriptional regulator MraZ of Xanthobacter autotrophicus (strain ATCC BAA-1158 / Py2).